A 220-amino-acid chain; its full sequence is ATP-dependent dethiobiotin synthetase BioD (220 aa).

Residue 11-16 (GVGKTF) coordinates ATP. T15 contacts Mg(2+). The active site involves K36. Position 40 (T40) interacts with substrate. ATP is bound by residues D48 and 107-110 (EGAG). Residues D48 and E107 each coordinate Mg(2+).

Belongs to the dethiobiotin synthetase family. In terms of assembly, homodimer. Mg(2+) serves as cofactor.

It is found in the cytoplasm. It catalyses the reaction (7R,8S)-7,8-diammoniononanoate + CO2 + ATP = (4R,5S)-dethiobiotin + ADP + phosphate + 3 H(+). It participates in cofactor biosynthesis; biotin biosynthesis; biotin from 7,8-diaminononanoate: step 1/2. Functionally, catalyzes a mechanistically unusual reaction, the ATP-dependent insertion of CO2 between the N7 and N8 nitrogen atoms of 7,8-diaminopelargonic acid (DAPA, also called 7,8-diammoniononanoate) to form a ureido ring. The protein is ATP-dependent dethiobiotin synthetase BioD of Aquifex aeolicus (strain VF5).